A 523-amino-acid chain; its full sequence is GMP synthase [glutamine-hydrolyzing] (523 aa).

A Glutamine amidotransferase type-1 domain is found at 8 to 205 (KILILDFGSQ…VENICGCARS (198 aa)). The active-site Nucleophile is Cys-85. Residues His-179 and Glu-181 contribute to the active site. One can recognise a GMPS ATP-PPase domain in the interval 206 to 398 (WTPENIIEDA…LGLPAEMLNR (193 aa)). Position 233 to 239 (233 to 239 (SGGVDSS)) interacts with ATP.

In terms of assembly, homodimer.

It catalyses the reaction XMP + L-glutamine + ATP + H2O = GMP + L-glutamate + AMP + diphosphate + 2 H(+). It participates in purine metabolism; GMP biosynthesis; GMP from XMP (L-Gln route): step 1/1. Its function is as follows. Catalyzes the synthesis of GMP from XMP. The protein is GMP synthase [glutamine-hydrolyzing] of Haemophilus ducreyi (strain 35000HP / ATCC 700724).